We begin with the raw amino-acid sequence, 249 residues long: Small ribosomal subunit protein uS3 (249 aa).

The KH type-2 domain occupies 39-108 (IRQLINKKLA…TVAVNVAEIP (70 aa)). Residues 214 to 249 (ETFARPQRRDRDERRPEGGDRPARRRPTARRRTGGE) are disordered. A compositionally biased stretch (basic and acidic residues) spans 220 to 235 (QRRDRDERRPEGGDRP). Positions 236–249 (ARRRPTARRRTGGE) are enriched in basic residues.

The protein belongs to the universal ribosomal protein uS3 family. Part of the 30S ribosomal subunit. Forms a tight complex with proteins S10 and S14.

Its function is as follows. Binds the lower part of the 30S subunit head. Binds mRNA in the 70S ribosome, positioning it for translation. In Deinococcus radiodurans (strain ATCC 13939 / DSM 20539 / JCM 16871 / CCUG 27074 / LMG 4051 / NBRC 15346 / NCIMB 9279 / VKM B-1422 / R1), this protein is Small ribosomal subunit protein uS3.